The sequence spans 522 residues: Penicillin-sensitive carboxypeptidase A (522 aa).

Catalysis depends on Ser94, which acts as the Acyl-ester intermediate. The active-site Proton acceptor is the Lys97. Residue Ser351 is part of the active site. Lys461 lines the substrate pocket.

This sequence belongs to the peptidase S13 family.

The enzyme catalyses Preferential cleavage: (Ac)2-L-Lys-D-Ala-|-D-Ala. Also transpeptidation of peptidyl-alanyl moieties that are N-acyl substituents of D-alanine.. Inhibited by penicillin G. Functionally, carboxypeptidase. The polypeptide is Penicillin-sensitive carboxypeptidase A (pscA) (Dictyostelium discoideum (Social amoeba)).